The sequence spans 319 residues: BTB/POZ domain-containing adapter for CUL3-mediated RhoA degradation protein 2 (319 aa).

In terms of domain architecture, BTB spans 31 to 99 (KYIRLNVGGC…LRDDTITLPK (69 aa)).

It belongs to the BACURD family. As to quaternary structure, component of the BCR(TNFAIP1) E3 ubiquitin ligase complex, at least composed of cul3, tnfaip1/bacurd2 and rbx1.

Its subcellular location is the cytoplasm. The protein resides in the nucleus. The protein localises to the endosome. It participates in protein modification; protein ubiquitination. In terms of biological role, substrate-specific adapter of a BCR (BTB-CUL3-RBX1) E3 ubiquitin-protein ligase complex involved in regulation of cytoskeleton structure. The BCR(TNFAIP1) E3 ubiquitin ligase complex mediates the ubiquitination of target proteins, leading to their degradation by the proteasome. This Xenopus tropicalis (Western clawed frog) protein is BTB/POZ domain-containing adapter for CUL3-mediated RhoA degradation protein 2 (tnfaip1).